The sequence spans 364 residues: 3-isopropylmalate dehydrogenase (364 aa).

78 to 91 (GKKWDYLSIDKRPE) provides a ligand contact to NAD(+). Positions 99, 109, 138, and 227 each coordinate substrate. Residues Asp-227, Asp-251, and Asp-255 each coordinate Mg(2+). NAD(+) is bound at residue 285-297 (GSAPDIAGKNIAN).

The protein belongs to the isocitrate and isopropylmalate dehydrogenases family. LeuB type 1 subfamily. In terms of assembly, homodimer. Mg(2+) serves as cofactor. It depends on Mn(2+) as a cofactor.

Its subcellular location is the cytoplasm. It carries out the reaction (2R,3S)-3-isopropylmalate + NAD(+) = 4-methyl-2-oxopentanoate + CO2 + NADH. It participates in amino-acid biosynthesis; L-leucine biosynthesis; L-leucine from 3-methyl-2-oxobutanoate: step 3/4. Its function is as follows. Catalyzes the oxidation of 3-carboxy-2-hydroxy-4-methylpentanoate (3-isopropylmalate) to 3-carboxy-4-methyl-2-oxopentanoate. The product decarboxylates to 4-methyl-2 oxopentanoate. The protein is 3-isopropylmalate dehydrogenase of Buchnera aphidicola subsp. Uroleucon erigeronensis.